A 189-amino-acid polypeptide reads, in one-letter code: Large ribosomal subunit protein eL18 (189 aa).

Belongs to the eukaryotic ribosomal protein eL18 family.

The protein localises to the cytoplasm. This Aedes aegypti (Yellowfever mosquito) protein is Large ribosomal subunit protein eL18 (RpL18).